Consider the following 229-residue polypeptide: Potassium/proton antiporter CemA (229 aa).

The next 3 membrane-spanning stretches (helical) occupy residues 6–26 (AFIP…ISLC), 107–127 (ILHF…SFWG), and 189–209 (ILSG…KYWI).

It belongs to the CemA family.

The protein localises to the plastid. It localises to the chloroplast inner membrane. The catalysed reaction is K(+)(in) + H(+)(out) = K(+)(out) + H(+)(in). Contributes to K(+)/H(+) antiport activity by supporting proton efflux to control proton extrusion and homeostasis in chloroplasts in a light-dependent manner to modulate photosynthesis. Prevents excessive induction of non-photochemical quenching (NPQ) under continuous-light conditions. Indirectly promotes efficient inorganic carbon uptake into chloroplasts. The polypeptide is Potassium/proton antiporter CemA (Lepidium virginicum (Virginia pepperweed)).